The primary structure comprises 486 residues: N-succinylglutamate 5-semialdehyde dehydrogenase (486 aa).

Position 220–225 (220–225 (GSSRTG)) interacts with NAD(+). Residues Glu-243 and Cys-277 contribute to the active site.

It belongs to the aldehyde dehydrogenase family. AstD subfamily.

It carries out the reaction N-succinyl-L-glutamate 5-semialdehyde + NAD(+) + H2O = N-succinyl-L-glutamate + NADH + 2 H(+). It functions in the pathway amino-acid degradation; L-arginine degradation via AST pathway; L-glutamate and succinate from L-arginine: step 4/5. In terms of biological role, catalyzes the NAD-dependent reduction of succinylglutamate semialdehyde into succinylglutamate. The protein is N-succinylglutamate 5-semialdehyde dehydrogenase of Shewanella frigidimarina (strain NCIMB 400).